Here is a 442-residue protein sequence, read N- to C-terminus: MHAVPTHAASPERLPFYRQLYFQVVVAIVAGVLLGHFEPQYAEQFKPLGDAFIKLVKMIIAPVIFLTIVTGIAGMTHLRTVGRVFLKAMAYFLFFSTLALVVGMVVAHVVQPGAGMNINPADLDQAAVKGYVAKSHELTLTGFAMDIIPKTLVSPFVGDNILQVLFVAVLFGISLAMVGDAGKPVLNFLEALTAPVFKLVGILMKAAPLGAFGAIAFTIGKFGLGSLVNLAWLVGSFYITSLLFVVVVLGFVARLCGFSVLKLARYLKAELLLVLGTSSSESALPSLMQKMERAGCGKSVVGLVVPTGYSFNLDGTNIYMTLAALFIAQATNTHLTLGHEIALLLVAMLSSKGAAGVTGAGFITLAATLAVVPEVPVAGMALILGVDRFMSECRSLTNFMGNAVATVVVSRWENELDYSKLNAALDGEPVQALPAEAAAVKA.

The next 8 helical transmembrane spans lie at 19 to 39 (QLYF…HFEP), 55 to 75 (LVKM…IAGM), 90 to 110 (AYFL…AHVV), 161 to 181 (ILQV…VGDA), 199 to 219 (LVGI…AFTI), 232 to 252 (WLVG…LGFV), 318 to 338 (IYMT…LTLG), and 366 to 386 (AATL…ILGV).

Belongs to the dicarboxylate/amino acid:cation symporter (DAACS) (TC 2.A.23) family.

It localises to the cell inner membrane. Functionally, responsible for the transport of dicarboxylates such as succinate, fumarate, and malate from the periplasm across the membrane. This is C4-dicarboxylate transport protein from Delftia acidovorans (strain DSM 14801 / SPH-1).